The following is an 880-amino-acid chain: DNA mismatch repair protein MutS (880 aa).

Residue glycine 635–serine 642 participates in ATP binding.

It belongs to the DNA mismatch repair MutS family.

Its function is as follows. This protein is involved in the repair of mismatches in DNA. It is possible that it carries out the mismatch recognition step. This protein has a weak ATPase activity. The protein is DNA mismatch repair protein MutS of Nitrosomonas eutropha (strain DSM 101675 / C91 / Nm57).